Reading from the N-terminus, the 273-residue chain is MALNSINTNAGAMIALQNLNGTNSELTTVQQRINTGKKIASAKDNGAIWATAKNQSATAASMNAVKDSLQRGQSTIDVALAAGDTITDLLGKMKEKALAASDTSLNTASFNALKSDFDSLRDQIEKAATNAKFNGVSIADGSTTKLTFLANSDGSGFTVNAKTISLAGIGLTTTSTFTTAAAAKTMIGTIDTALQTATNKLASLGTSSVGLDTHLTFVGKLQDSLDAGVGNLVDADLAKESAKLQSLQTKQQLGVQALSIANQSSSSILSLFR.

This sequence belongs to the bacterial flagellin family. In C.crescentus, the flagellar filament is composed of multiple flagellins of 29 kDa; 27 kDa and 25 kDa.

It localises to the secreted. The protein localises to the bacterial flagellum. Functionally, flagellin is the subunit protein which polymerizes to form the filaments of bacterial flagella. In Caulobacter vibrioides (strain ATCC 19089 / CIP 103742 / CB 15) (Caulobacter crescentus), this protein is Flagellin FljK (fljK).